A 327-amino-acid polypeptide reads, in one-letter code: Endo-1,4-beta-xylanase C (327 aa).

Positions 1–15 are cleaved as a signal peptide; it reads MKFSSLLFTASLVAA. The 283-residue stretch at 43 to 325 folds into the GH10 domain; it reads TITDPNLLQS…KPAYTAVVNA (283 aa). E154 (proton donor) is an active-site residue. Catalysis depends on E262, which acts as the Nucleophile. Residues C280 and C286 are joined by a disulfide bond.

It belongs to the glycosyl hydrolase 10 (cellulase F) family.

The protein resides in the secreted. The enzyme catalyses Endohydrolysis of (1-&gt;4)-beta-D-xylosidic linkages in xylans.. It functions in the pathway glycan degradation; xylan degradation. Weakly inhibited by the wheat xylanase inhibiting protein I (XIP-I). Its function is as follows. Endo-1,4-beta-xylanase involved in the hydrolysis of xylan, a major structural heterogeneous polysaccharide found in plant biomass representing the second most abundant polysaccharide in the biosphere, after cellulose. Plays an important role in causing fusarium head blight (FHB) on cereal crops. The chain is Endo-1,4-beta-xylanase C (XYLC) from Gibberella zeae (strain ATCC MYA-4620 / CBS 123657 / FGSC 9075 / NRRL 31084 / PH-1) (Wheat head blight fungus).